Reading from the N-terminus, the 317-residue chain is Cytochrome f (317 aa).

An N-terminal signal peptide occupies residues 1-34 (MKGLKNQIMKKTSLFICTLLFILSIVFYPKITFA). Positions 35, 55, 58, and 59 each coordinate heme. A helical transmembrane segment spans residues 284 to 304 (VIGLIAFFIGVGLTQILLVLK).

It belongs to the cytochrome f family. The 4 large subunits of the cytochrome b6-f complex are cytochrome b6, subunit IV (17 kDa polypeptide, PetD), cytochrome f and the Rieske protein, while the 4 small subunits are PetG, PetL, PetM and PetN. The complex functions as a dimer. Heme is required as a cofactor.

The protein resides in the cellular thylakoid membrane. Functionally, component of the cytochrome b6-f complex, which mediates electron transfer between photosystem II (PSII) and photosystem I (PSI), cyclic electron flow around PSI, and state transitions. In Prochlorococcus marinus (strain MIT 9215), this protein is Cytochrome f.